Consider the following 156-residue polypeptide: ATP synthase subunit b (156 aa).

The chain crosses the membrane as a helical span at residues 3–23; the sequence is ITLTIFAQALAFAGLIWIVAT.

Belongs to the ATPase B chain family. As to quaternary structure, F-type ATPases have 2 components, F(1) - the catalytic core - and F(0) - the membrane proton channel. F(1) has five subunits: alpha(3), beta(3), gamma(1), delta(1), epsilon(1). F(0) has three main subunits: a(1), b(2) and c(10-14). The alpha and beta chains form an alternating ring which encloses part of the gamma chain. F(1) is attached to F(0) by a central stalk formed by the gamma and epsilon chains, while a peripheral stalk is formed by the delta and b chains.

Its subcellular location is the cell inner membrane. In terms of biological role, f(1)F(0) ATP synthase produces ATP from ADP in the presence of a proton or sodium gradient. F-type ATPases consist of two structural domains, F(1) containing the extramembraneous catalytic core and F(0) containing the membrane proton channel, linked together by a central stalk and a peripheral stalk. During catalysis, ATP synthesis in the catalytic domain of F(1) is coupled via a rotary mechanism of the central stalk subunits to proton translocation. Functionally, component of the F(0) channel, it forms part of the peripheral stalk, linking F(1) to F(0). The polypeptide is ATP synthase subunit b (Xanthomonas campestris pv. campestris (strain 8004)).